We begin with the raw amino-acid sequence, 567 residues long: MEQRSAETRIVEALLERRRLKDTDLVRARQLQAESGMGLLALLGRLGLVSERDHAETCAEVLGLPLVDARQLGDTPPEMLPEVQGLSLRFLKQFHLCPVGERDGRLDLWIADPYDDYAIDAVRLATGLPLLLQVGLRSEIDDLIERWYGQGRSAMGTIVETADGDASSTDDIEALRDLASEAPVIRLVNLVIQHAVELRASDIHIEPFESRLKVRYRVDGVLVEGESPPAKLTAAVISRIKIMAKLNIAERRLPQDGRIMLRVQGKELDLRVSTVPTAHGESVVMRLLDRETVVFDFYKLGFTEDFLPQFRKVLEQPHGIMLVTGPTGSGKTTTLYTALSQLNTSDVKIITVEDPVEYQIEGINQIQAKPQIGLDFANALRSIVRQDPDIIMIGEMRDLETARIAIQSALTGHLVLSTLHTNNAAGGITRLLDMGVEDYLLTSTINGILAQRLVRKLDLANAERYAASPEEIERFDLRRLQPDGEIFLYRPRATAAAPTGYLGRTTIVEFLVMNDELRRAVMRRAGMGEIEQLARKSGMRTMYEDGLSKALRGETTIEEVLRVTEDA.

An ATP-binding site is contributed by 325 to 332 (GPTGSGKT).

The protein belongs to the GSP E family. In terms of assembly, forms homooligomers; most probably hexamers. Interacts with XpsL/GspL.

The protein resides in the cell inner membrane. The catalysed reaction is ATP + H2O + cellular proteinSide 1 = ADP + phosphate + cellular proteinSide 2.. ATPase component of the type II secretion system required for the energy-dependent secretion of extracellular factors such as proteases and toxins from the periplasm. Acts as a molecular motor to provide the energy that is required for assembly of the pseudopilus and the extrusion of substrates generated in the cytoplasm. The chain is Type II secretion system protein E (xpsE) from Xanthomonas campestris pv. campestris (strain ATCC 33913 / DSM 3586 / NCPPB 528 / LMG 568 / P 25).